The primary structure comprises 243 residues: Vesicle-associated membrane protein-associated protein B (243 aa).

Alanine 2 is modified (N-acetylalanine). The Cytoplasmic portion of the chain corresponds to 2 to 218 (AKVEQVLSLE…AALAASGKEE (217 aa)). The region spanning 7–124 (VLSLEPQHEL…MDSKLRCVFE (118 aa)) is the MSP domain. Serine 146 bears the Phosphoserine mark. Lysine 147 is covalently cross-linked (Glycyl lysine isopeptide (Lys-Gly) (interchain with G-Cter in SUMO1)). Serine 159 carries the phosphoserine modification. Positions 161–196 (LDDAEVKKVMEECRRLQGEVQRLREESRQLKEEDGL) form a coiled coil. Position 206 is a phosphoserine (serine 206). A helical; Anchor for type IV membrane protein membrane pass occupies residues 219–239 (GLSARLLALVVLFFIVGVIIG).

This sequence belongs to the VAMP-associated protein (VAP) (TC 9.B.17) family. As to quaternary structure, homodimer, and heterodimer with VAPA. Interacts with VAMP1 and VAMP2. Interacts (via MSP domain) with ZFYVE27. Interacts with RMDN3. Interacts with KIF5A in a ZFYVE27-dependent manner. Interacts (via MSP domain) with STARD3 (via phospho-FFAT motif). Interacts with STARD3NL (via FFAT motif). Interacts with CERT1. Interacts with PLEKHA3 and SACM1L to form a ternary complex. Interacts with VPS13A (via FFAT motif). Interacts with RB1CC1 (via phosphorylated FFAT motif), MIGA2 (via phosphorylated FFAT motif), RMDN3 (via phosphorylated FFAT motif), OSBPL1A (via FFAT motif), KCNB1 (via phosphorylated FFAT motif) and KCNB2 (via phosphorylated FFAT motif). Interacts (via MSP domain) with WDR44; the interactions connect the endoplasmic reticulum (ER) with the endosomal tubule. Ubiquitous.

It is found in the endoplasmic reticulum membrane. Functionally, endoplasmic reticulum (ER)-anchored protein that mediates the formation of contact sites between the ER and endosomes via interaction with FFAT motif-containing proteins such as STARD3 or WDR44. Interacts with STARD3 in a FFAT motif phosphorylation dependent manner. Via interaction with WDR44 participates in neosynthesized protein export. Participates in the endoplasmic reticulum unfolded protein response (UPR) by inducing ERN1/IRE1 activity. Involved in cellular calcium homeostasis regulation. In Rattus norvegicus (Rat), this protein is Vesicle-associated membrane protein-associated protein B.